The sequence spans 191 residues: Orotate phosphoribosyltransferase (191 aa).

114–122 is a 5-phospho-alpha-D-ribose 1-diphosphate binding site; it reads EDVITTGGS. Orotate is bound by residues T118 and R146.

The protein belongs to the purine/pyrimidine phosphoribosyltransferase family. PyrE subfamily. In terms of assembly, homodimer. Mg(2+) serves as cofactor.

The enzyme catalyses orotidine 5'-phosphate + diphosphate = orotate + 5-phospho-alpha-D-ribose 1-diphosphate. It participates in pyrimidine metabolism; UMP biosynthesis via de novo pathway; UMP from orotate: step 1/2. In terms of biological role, catalyzes the transfer of a ribosyl phosphate group from 5-phosphoribose 1-diphosphate to orotate, leading to the formation of orotidine monophosphate (OMP). This Desulforamulus reducens (strain ATCC BAA-1160 / DSM 100696 / MI-1) (Desulfotomaculum reducens) protein is Orotate phosphoribosyltransferase.